Here is a 1178-residue protein sequence, read N- to C-terminus: DNA-directed RNA polymerase subunit beta' (1178 aa).

Residues Cys60, Cys62, Cys75, and Cys78 each coordinate Zn(2+). Positions 450, 452, and 454 each coordinate Mg(2+). Zn(2+) is bound by residues Cys795, Cys869, Cys876, and Cys879.

This sequence belongs to the RNA polymerase beta' chain family. In terms of assembly, the RNAP catalytic core consists of 2 alpha, 1 beta, 1 beta' and 1 omega subunit. When a sigma factor is associated with the core the holoenzyme is formed, which can initiate transcription. Mg(2+) is required as a cofactor. Requires Zn(2+) as cofactor.

The enzyme catalyses RNA(n) + a ribonucleoside 5'-triphosphate = RNA(n+1) + diphosphate. Its function is as follows. DNA-dependent RNA polymerase catalyzes the transcription of DNA into RNA using the four ribonucleoside triphosphates as substrates. The protein is DNA-directed RNA polymerase subunit beta' of Clostridium botulinum (strain Loch Maree / Type A3).